The following is a 38-amino-acid chain: Cytochrome b6-f complex subunit 5 (38 aa).

The helical transmembrane segment at 5 to 25 (LLSGIVLGLIPITLAGLFVTA) threads the bilayer.

It belongs to the PetG family. As to quaternary structure, the 4 large subunits of the cytochrome b6-f complex are cytochrome b6, subunit IV (17 kDa polypeptide, PetD), cytochrome f and the Rieske protein, while the 4 small subunits are PetG, PetL, PetM and PetN. The complex functions as a dimer.

It localises to the plastid. The protein localises to the chloroplast thylakoid membrane. In terms of biological role, component of the cytochrome b6-f complex, which mediates electron transfer between photosystem II (PSII) and photosystem I (PSI), cyclic electron flow around PSI, and state transitions. PetG is required for either the stability or assembly of the cytochrome b6-f complex. This is Cytochrome b6-f complex subunit 5 from Adiantum capillus-veneris (Maidenhair fern).